The chain runs to 458 residues: Argininosuccinate lyase (458 aa).

The protein belongs to the lyase 1 family. Argininosuccinate lyase subfamily.

It is found in the cytoplasm. The catalysed reaction is 2-(N(omega)-L-arginino)succinate = fumarate + L-arginine. The protein operates within amino-acid biosynthesis; L-arginine biosynthesis; L-arginine from L-ornithine and carbamoyl phosphate: step 3/3. The protein is Argininosuccinate lyase of Salmonella newport (strain SL254).